An 85-amino-acid chain; its full sequence is ATP synthase subunit c (85 aa).

Transmembrane regions (helical) follow at residues 10–30 and 53–73; these read IAVA…FAIL and FIVA…ALFF.

The protein belongs to the ATPase C chain family. In terms of assembly, F-type ATPases have 2 components, F(1) - the catalytic core - and F(0) - the membrane proton channel. F(1) has five subunits: alpha(3), beta(3), gamma(1), delta(1), epsilon(1). F(0) has three main subunits: a(1), b(2) and c(10-14). The alpha and beta chains form an alternating ring which encloses part of the gamma chain. F(1) is attached to F(0) by a central stalk formed by the gamma and epsilon chains, while a peripheral stalk is formed by the delta and b chains.

Its subcellular location is the cell inner membrane. In terms of biological role, f(1)F(0) ATP synthase produces ATP from ADP in the presence of a proton or sodium gradient. F-type ATPases consist of two structural domains, F(1) containing the extramembraneous catalytic core and F(0) containing the membrane proton channel, linked together by a central stalk and a peripheral stalk. During catalysis, ATP synthesis in the catalytic domain of F(1) is coupled via a rotary mechanism of the central stalk subunits to proton translocation. Its function is as follows. Key component of the F(0) channel; it plays a direct role in translocation across the membrane. A homomeric c-ring of between 10-14 subunits forms the central stalk rotor element with the F(1) delta and epsilon subunits. The sequence is that of ATP synthase subunit c from Shewanella halifaxensis (strain HAW-EB4).